The primary structure comprises 575 residues: Beta-amylase 1, chloroplastic (575 aa).

Residues 1-41 (MALNLSHQLGVLAGTPIKSGEMTDSSLLSISPPSARMMTPK) constitute a chloroplast transit peptide. S55 and S59 each carry phosphoserine. Cysteines 73 and 511 form a disulfide. 3 residues coordinate substrate: D147, H187, and D195. The Proton donor role is filled by E279. Residues K392, H397, and T439 each contribute to the substrate site. The active-site Proton acceptor is the E477. Residues 478–479 (NA) and R517 contribute to the substrate site.

It belongs to the glycosyl hydrolase 14 family. In terms of tissue distribution, expressed in leaves, roots, flowers, pollen, and seeds.

Its subcellular location is the plastid. The protein localises to the chloroplast. The catalysed reaction is Hydrolysis of (1-&gt;4)-alpha-D-glucosidic linkages in polysaccharides so as to remove successive maltose units from the non-reducing ends of the chains.. With respect to regulation, redox regulation; active in reducing conditions, inactive in oxidizing conditions. Thioredoxins f1, m1, and y1 mediate the reversible reductive activation of oxidized BAM1. Beta-amylase activity. Can use p-nitrophenyl maltopentaoside (PNPG5) as substrate only in reduced form. Can play a minor role in the starch degradation and maltose metabolism in chloroplasts during the night. More active on phosphorylated glucan. Interacts directly with starch or other alpha-1,4-glucan. In Arabidopsis thaliana (Mouse-ear cress), this protein is Beta-amylase 1, chloroplastic (BAM1).